Here is a 425-residue protein sequence, read N- to C-terminus: NAC transcription factor ONAC010 (425 aa).

The span at 1–10 shows a compositional bias: polar residues; it reads MESPDSSSGS. The interval 1–34 is disordered; that stretch reads MESPDSSSGSAPPRVLRRQQQQPGSAPELPPGFR. Over residues 12 to 23 the composition is skewed to low complexity; sequence PPRVLRRQQQQP. The NAC domain occupies 29-200; that stretch reads LPPGFRFHPT…DWVLCRIYKK (172 aa). A DNA-binding region spans residues 129-206; that stretch reads VGVKKALVFY…IYKKTNKAGA (78 aa).

Its subcellular location is the nucleus. Functionally, transcription factor of the NAC family associated with male fertility. This Oryza sativa subsp. indica (Rice) protein is NAC transcription factor ONAC010 (ONAC010).